The chain runs to 105 residues: ATP synthase subunit c (105 aa).

A run of 3 helical transmembrane segments spans residues F3–G23, S32–G52, and V78–I98.

It belongs to the ATPase C chain family. In terms of assembly, F-type ATPases have 2 components, F(1) - the catalytic core - and F(0) - the membrane proton channel. F(1) has five subunits: alpha(3), beta(3), gamma(1), delta(1), epsilon(1). F(0) has three main subunits: a(1), b(2) and c(10-14). The alpha and beta chains form an alternating ring which encloses part of the gamma chain. F(1) is attached to F(0) by a central stalk formed by the gamma and epsilon chains, while a peripheral stalk is formed by the delta and b chains.

Its subcellular location is the cell inner membrane. F(1)F(0) ATP synthase produces ATP from ADP in the presence of a proton or sodium gradient. F-type ATPases consist of two structural domains, F(1) containing the extramembraneous catalytic core and F(0) containing the membrane proton channel, linked together by a central stalk and a peripheral stalk. During catalysis, ATP synthesis in the catalytic domain of F(1) is coupled via a rotary mechanism of the central stalk subunits to proton translocation. In terms of biological role, key component of the F(0) channel; it plays a direct role in translocation across the membrane. A homomeric c-ring of between 10-14 subunits forms the central stalk rotor element with the F(1) delta and epsilon subunits. This Helicobacter pylori (strain P12) protein is ATP synthase subunit c.